A 532-amino-acid polypeptide reads, in one-letter code: Glucose-6-phosphate isomerase (532 aa).

The Proton donor role is filled by Glu-322. Residues His-351 and Lys-457 contribute to the active site.

The protein belongs to the GPI family.

The protein resides in the cytoplasm. The catalysed reaction is alpha-D-glucose 6-phosphate = beta-D-fructose 6-phosphate. It participates in carbohydrate biosynthesis; gluconeogenesis. It functions in the pathway carbohydrate degradation; glycolysis; D-glyceraldehyde 3-phosphate and glycerone phosphate from D-glucose: step 2/4. Functionally, catalyzes the reversible isomerization of glucose-6-phosphate to fructose-6-phosphate. The chain is Glucose-6-phosphate isomerase from Synechococcus sp. (strain JA-2-3B'a(2-13)) (Cyanobacteria bacterium Yellowstone B-Prime).